Here is a 263-residue protein sequence, read N- to C-terminus: 3-methyl-2-oxobutanoate hydroxymethyltransferase (263 aa).

2 residues coordinate Mg(2+): Asp45 and Asp84. Residues 45-46, Asp84, and Lys112 each bind 3-methyl-2-oxobutanoate; that span reads DS. Glu114 is a binding site for Mg(2+). The active-site Proton acceptor is the Glu181.

The protein belongs to the PanB family. As to quaternary structure, homodecamer; pentamer of dimers. The cofactor is Mg(2+).

Its subcellular location is the cytoplasm. It catalyses the reaction 3-methyl-2-oxobutanoate + (6R)-5,10-methylene-5,6,7,8-tetrahydrofolate + H2O = 2-dehydropantoate + (6S)-5,6,7,8-tetrahydrofolate. It participates in cofactor biosynthesis; (R)-pantothenate biosynthesis; (R)-pantoate from 3-methyl-2-oxobutanoate: step 1/2. In terms of biological role, catalyzes the reversible reaction in which hydroxymethyl group from 5,10-methylenetetrahydrofolate is transferred onto alpha-ketoisovalerate to form ketopantoate. In Buchnera aphidicola subsp. Acyrthosiphon pisum (strain 5A), this protein is 3-methyl-2-oxobutanoate hydroxymethyltransferase.